Here is a 441-residue protein sequence, read N- to C-terminus: UDP-N-acetylglucosamine--N-acetylmuramyl-(pentapeptide) pyrophosphoryl-undecaprenol N-acetylglucosamine transferase (441 aa).

UDP-N-acetyl-alpha-D-glucosamine is bound by residues 28 to 30, asparagine 140, arginine 176, serine 204, isoleucine 257, and glutamine 302; that span reads TGG.

Belongs to the glycosyltransferase 28 family. MurG subfamily.

Its subcellular location is the cell inner membrane. The catalysed reaction is di-trans,octa-cis-undecaprenyl diphospho-N-acetyl-alpha-D-muramoyl-L-alanyl-D-glutamyl-meso-2,6-diaminopimeloyl-D-alanyl-D-alanine + UDP-N-acetyl-alpha-D-glucosamine = di-trans,octa-cis-undecaprenyl diphospho-[N-acetyl-alpha-D-glucosaminyl-(1-&gt;4)]-N-acetyl-alpha-D-muramoyl-L-alanyl-D-glutamyl-meso-2,6-diaminopimeloyl-D-alanyl-D-alanine + UDP + H(+). It functions in the pathway cell wall biogenesis; peptidoglycan biosynthesis. In terms of biological role, cell wall formation. Catalyzes the transfer of a GlcNAc subunit on undecaprenyl-pyrophosphoryl-MurNAc-pentapeptide (lipid intermediate I) to form undecaprenyl-pyrophosphoryl-MurNAc-(pentapeptide)GlcNAc (lipid intermediate II). The protein is UDP-N-acetylglucosamine--N-acetylmuramyl-(pentapeptide) pyrophosphoryl-undecaprenol N-acetylglucosamine transferase of Xanthomonas oryzae pv. oryzae (strain KACC10331 / KXO85).